A 295-amino-acid chain; its full sequence is Acetylglutamate kinase (295 aa).

Substrate contacts are provided by residues Gly-66–Gly-67, Arg-88, and Asn-193.

It belongs to the acetylglutamate kinase family. ArgB subfamily.

The protein localises to the cytoplasm. The enzyme catalyses N-acetyl-L-glutamate + ATP = N-acetyl-L-glutamyl 5-phosphate + ADP. The protein operates within amino-acid biosynthesis; L-arginine biosynthesis; N(2)-acetyl-L-ornithine from L-glutamate: step 2/4. Functionally, catalyzes the ATP-dependent phosphorylation of N-acetyl-L-glutamate. The sequence is that of Acetylglutamate kinase from Allorhizobium ampelinum (strain ATCC BAA-846 / DSM 112012 / S4) (Agrobacterium vitis (strain S4)).